Here is a 1246-residue protein sequence, read N- to C-terminus: Probable membrane antigen 3 (1246 aa).

It is found in the virion tegument. The sequence is that of Probable membrane antigen 3 (3) from Saimiri sciureus (Common squirrel monkey).